Reading from the N-terminus, the 677-residue chain is Polyunsaturated fatty acid lipoxygenase ALOX15B (677 aa).

One can recognise a PLAT domain in the interval 2-125; it reads AKFRVRVSTG…ELVLREGAAK (124 aa). Gly-15, Gly-17, Asp-39, His-40, Gly-42, Glu-44, Asp-86, and Ala-87 together coordinate Ca(2+). The 552-residue stretch at 126 to 677 folds into the Lipoxygenase domain; it reads VSWQDHHRTL…PPLIENSVSI (552 aa). Fe cation is bound by residues His-374, His-379, His-554, and Ile-677.

Belongs to the lipoxygenase family. Requires Fe cation as cofactor.

It localises to the cytoplasm. It is found in the cytosol. The protein localises to the cell membrane. Its subcellular location is the cytoskeleton. The protein resides in the membrane. It localises to the cell junction. It is found in the adherens junction. The protein localises to the focal adhesion. Its subcellular location is the nucleus. It carries out the reaction (5Z,8Z,11Z,14Z)-eicosatetraenoate + O2 = (15S)-hydroperoxy-(5Z,8Z,11Z,13E)-eicosatetraenoate. The catalysed reaction is (9Z,12Z)-octadecadienoate + O2 = 13-hydroperoxy-(9Z,11E)-octadecadienoate. It catalyses the reaction (5S)-hydroxy-(6E,8Z,11Z,14Z)-eicosatetraenoate + O2 = (5S)-hydroxy-(15S)-hydroperoxy-(6E,8Z,11Z,13E)-eicosatetraenoate. The enzyme catalyses (5Z,8Z,11Z,14Z)-eicosatetraenoate + O2 = 5-hydroperoxy-(6E,8Z,11Z,14Z)-eicosatetraenoate. It carries out the reaction (5S,6R)-dihydroxy-(7E,9E,11Z,14Z)-eicosatetraenoate + O2 = (5S,6R)-dihydroxy-(15S)-hydroperoxy-(7E,9E,11Z,13E)-eicosatetraenoate. The catalysed reaction is (5S)-hydroperoxy-(6E,8Z,11Z,14Z)-eicosatetraenoate + O2 = (5S,15S)-dihydroperoxy-(6E,8Z,11Z,13E)-eicosatetraenoate. It catalyses the reaction 2-(5Z,8Z,11Z,14Z-eicosatetraenoyl)-glycerol + O2 = 2-[15(S)-hydroperoxy-(5Z,8Z,11Z,13E)-eicosatetraenoyl]-glycerol. The enzyme catalyses (8S)-hydroperoxy-(5Z,9E,11Z,14Z)-eicosatetraenoate + O2 = (8S,15S)-dihydroperoxy-(5Z,9E,11Z,13E)-eicosatetraenoate. It carries out the reaction N-(5Z,8Z,11Z,14Z)-eicosatetraenoyl-L-alanine + O2 = N-(15S)-hydroperoxy-(5Z,8Z,11Z,13E)-eicosatetraenoyl-alanine. The catalysed reaction is N-(5Z,8Z,11Z,14Z)-eicosatetraenoyl-gamma-aminobutanoate + O2 = N-(15S)-hydroperoxy-(5Z,8Z,11Z,13E)-eicosatetraenoyl-gamma-aminobutanoate. It catalyses the reaction N-(5Z,8Z,11Z,14Z)-eicosatetraenoyl-glycine + O2 = N-(15S)-hydroperoxy-(5Z,8Z,11Z,13E)-eicosatetraenoyl-glycine. The enzyme catalyses N-(5Z,8Z,11Z,14Z)-eicosatetraenoyl-taurine + O2 = N-(15S)-hydroperoxy-(5Z,8Z,11Z,13E)-eicosatetraenoyl-taurine. It carries out the reaction 2-(5Z,8Z,11Z,14Z-eicosatetraenoyl)-glycerol + O2 = 2-[12-hydroperoxy-(5Z,8Z,10E,14Z)-eicosatetraenoyl]-glycerol. The catalysed reaction is 1-octadecanoyl-2-(5Z,8Z,11Z,14Z-eicosatetraenoyl)-sn-glycero-3-phosphocholine + O2 = 1-octadecanoyl-2-(15-hydroperoxy-5Z,8Z,11Z,13E-eicosatetraenoyl)-sn-glycero-3-phosphocholine. It catalyses the reaction a 1-acyl-2-(5Z,8Z,11Z,14Z-eicosatetraenoyl)-sn-glycero-3-phospho-(1D-myo-inositol) + O2 = a 1-acyl-2-(15-hydroperoxy-5Z,8Z,11Z,13E-eicosatetraenoyl)-sn-glycero-3-phospho-(1D-myo-inositol). The enzyme catalyses a 1-acyl-2-(8Z,11Z,14Z-eicosatrienoyl)-sn-glycero-3-phospho-(1D-myo-inositol) + O2 = a 1-acyl-2-(15-hydroperoxy-8Z,11Z,13E-eicosatrienoyl)-sn-glycero-3-phospho-(1D-myo-inositol). It carries out the reaction 1-octadecanoyl-2-(5Z,8Z,11Z,14Z)-eicosatetraenoyl-sn-glycero-3-phosphoethanolamine + O2 = 1-octadecanoyl-2-(15-hydroperoxy-5Z,8Z,11Z,13E-eicosatetraenoyl)-sn-glycero-3-phosphoethanolamine. The catalysed reaction is 1-octadecanoyl-2-(5Z,8Z,11Z,14Z-eicosatetraenoyl)-sn-glycero-3-phospho-(1D-myo-inositol) + O2 = 1-octadecanoyl-2-(15-hydroperoxy-5Z,8Z,11Z,13E-eicosatetraenoyl)-sn-glycero-3-phospho-(1D-myo-inositol). It catalyses the reaction (8Z,11Z,14Z)-eicosatrienoate + O2 = 15-hydroperoxy-(8Z,11Z,13E)-eicosatrienoate. The enzyme catalyses (7S)-hydroperoxy-(4Z,8E,10Z,13Z,16Z,19Z)-docosahexaenoate + O2 = (7S,17S)-dihydroperoxy-(4Z,8E,10Z,13Z,15E,19Z)-docosahexaenoate. Its pathway is lipid metabolism; hydroperoxy eicosatetraenoic acid biosynthesis. Functionally, non-heme iron-containing dioxygenase that catalyzes the stereo-specific peroxidation of free and esterified polyunsaturated fatty acids (PUFAs) generating a spectrum of bioactive lipid mediators. Inserts a peroxyl group at C15 of arachidonate ((5Z,8Z,11Z,14Z)-eicosatetraenoate) producing (15S)-hydroperoxyeicosatetraenoate/(15S)-HPETE. Also peroxidizes linoleate ((9Z,12Z)-octadecadienoate) to 13-hydroperoxyoctadecadienoate/13-HPODE. Oxygenates arachidonyl derivatives such as 2-arachidonoylglycerol (2-AG) leading to the production and extracellular release of 15-hydroxyeicosatetraenoyl glycerol (15-HETE-G) that acts as a peroxisome proliferator-activated receptor alpha agonist. Has the ability to efficiently class-switch ALOX5 pro-inflammatory mediators into anti-inflammatory intermediates. Participates in the sequential oxidations of DHA ((4Z,7Z,10Z,13Z,16Z,19Z)-docosahexaenoate) to generate specialized pro-resolving mediators (SPMs) resolvin D5 ((7S,17S)-diHPDHA), which can actively down-regulate the immune response and have anti-aggregation properties with platelets. In addition to free PUFAs hydrolyzed from phospholipids, it directly oxidizes PUFAs esterified to membrane-bound phospholipids. Has no detectable 8S-lipoxygenase activity on arachidonate but reacts with (8S)-HPETE to produce (8S,15S)-diHPETE. May regulate progression through the cell cycle and cell proliferation. May also regulate cytokine secretion by macrophages and therefore play a role in the immune response. May also regulate macrophage differentiation into proatherogenic foam cells. This is Polyunsaturated fatty acid lipoxygenase ALOX15B from Rattus norvegicus (Rat).